The chain runs to 158 residues: Ribosome maturation factor RimP (158 aa).

The protein belongs to the RimP family.

The protein resides in the cytoplasm. Required for maturation of 30S ribosomal subunits. This chain is Ribosome maturation factor RimP, found in Leuconostoc citreum (strain KM20).